Reading from the N-terminus, the 247-residue chain is MSPPYPVEILTLFPGMVTGYLGASILGKAQEKGLLATTITDIREYAEGKHRVTDDAPYGGGAGMVMKPEPLVAAIEAAKARHPGARVLLMSPRGPTFTQATARELVRHEAGLILVCGRYEGVDERVMAHLDGELSLGDFVLTGGELAAMTVVDAVARLVPGVLGNVDSSVTESFEEGLLEHPQYTRPPVFRGVEVPAALQSGDHARIARWRRWKSLVLTHERRPDLYARVVLSKADQKLLARREEEL.

Residues glycine 117 and 136–141 each bind S-adenosyl-L-methionine; that span reads LGDFVL.

The protein belongs to the RNA methyltransferase TrmD family. As to quaternary structure, homodimer.

Its subcellular location is the cytoplasm. It carries out the reaction guanosine(37) in tRNA + S-adenosyl-L-methionine = N(1)-methylguanosine(37) in tRNA + S-adenosyl-L-homocysteine + H(+). In terms of biological role, specifically methylates guanosine-37 in various tRNAs. The polypeptide is tRNA (guanine-N(1)-)-methyltransferase (Myxococcus xanthus (strain DK1622)).